The primary structure comprises 149 residues: Pleckstrin homology domain-containing family J member 1 (149 aa).

Positions 15 to 108 (PAEMAAELGM…WMEALRRASY (94 aa)) constitute a PH domain.

Expressed in testis and liver.

This chain is Pleckstrin homology domain-containing family J member 1 (PLEKHJ1), found in Homo sapiens (Human).